The chain runs to 469 residues: Phosphatidylinositol 4-kinase type 2-beta (469 aa).

The disordered stretch occupies residues 1–84 (MAEACEPTRP…LDRTRTTSSE (84 aa)). Serine 37 carries the phosphoserine modification. Residues 108-439 (GVFPERISQG…AQMPCVIVEC (332 aa)) form the PI3K/PI4K catalytic domain. The tract at residues 114–120 (ISQGSSG) is G-loop. ATP is bound by residues serine 121 and lysine 136. The segment at 141-143 (EPY) is important for substrate binding. Residues 149 to 162 (KWTKYVHKVCCPCC) form an important for interaction with membranes region. ATP contacts are provided by residues 245-248 (QLFV) and 259-260 (RR). The tract at residues 252–260 (KEAEYWLRR) is important for interaction with membranes. The segment at 289 to 297 (RNTDRGNDN) is catalytic loop. Residues 330–350 (AIDNGLAFPFKHPDEWRAYPF) form an activation loop region. Aspartate 332 contacts ATP. Residues 345–354 (WRAYPFHWAW) form an important for interaction with membranes region.

It belongs to the PI3/PI4-kinase family. Type II PI4K subfamily.

It localises to the cytoplasm. Its subcellular location is the cytosol. The protein localises to the golgi apparatus membrane. The protein resides in the endoplasmic reticulum membrane. It is found in the cell membrane. It localises to the early endosome membrane. It carries out the reaction a 1,2-diacyl-sn-glycero-3-phospho-(1D-myo-inositol) + ATP = a 1,2-diacyl-sn-glycero-3-phospho-(1D-myo-inositol 4-phosphate) + ADP + H(+). Its function is as follows. Together with PI4K2A and the type III PI4Ks (PIK4CA and PIK4CB) it contributes to the overall PI4-kinase activity of the cell. This contribution may be especially significant in plasma membrane, endosomal and Golgi compartments. The phosphorylation of phosphatidylinositol (PI) to PI4P is the first committed step in the generation of phosphatidylinositol 4,5-bisphosphate (PIP2), a precursor of the second messenger inositol 1,4,5-trisphosphate (InsP3). Contributes to the production of InsP3 in stimulated cells and is likely to be involved in the regulation of vesicular trafficking. This chain is Phosphatidylinositol 4-kinase type 2-beta (Pi4k2b), found in Mus musculus (Mouse).